A 519-amino-acid chain; its full sequence is Importin subunit alpha-5 (519 aa).

In terms of domain architecture, IBB spans 1-58 (MSLRPSTKTEIRRIRYKVSVDAEEGRRRREDFLVEIRKSKRNENLMKKRRVKVLPPDY). ARM repeat units follow at residues 103 to 143 (SPPT…NIAS), 146 to 185 (SEHTKVVIDHGVVPLFVQLLASPDDDVREQAIWGLGNVAG), 188 to 228 (IQCR…NFFR), 230 to 269 (KPSPPFDLVKHVLPVLKRLVYSDDEQVLIDACWALSNLSD), 272 to 311 (NENIQSVIEAGVVPRLVELLQHASPVVLVPALRCIGNIVS), 314 to 354 (SQQT…NITA), 357 to 396 (EEQIQSVIDANLIPSLVNLAQHAEFDIKKEAIWAISNASV), and 400 to 439 (PNQIKYLVEQNCIKALCDILVCPDLRIILVSLGGLEMILI).

The protein belongs to the importin alpha family. As to quaternary structure, forms a complex with importin subunit beta-1.

It is found in the nucleus envelope. Functionally, binds to conventional NLS motifs and mediates nuclear protein import across the nuclear envelope. This is Importin subunit alpha-5 from Arabidopsis thaliana (Mouse-ear cress).